We begin with the raw amino-acid sequence, 362 residues long: Aminomethyltransferase (362 aa).

The protein belongs to the GcvT family. As to quaternary structure, the glycine cleavage system is composed of four proteins: P, T, L and H.

The catalysed reaction is N(6)-[(R)-S(8)-aminomethyldihydrolipoyl]-L-lysyl-[protein] + (6S)-5,6,7,8-tetrahydrofolate = N(6)-[(R)-dihydrolipoyl]-L-lysyl-[protein] + (6R)-5,10-methylene-5,6,7,8-tetrahydrofolate + NH4(+). Functionally, the glycine cleavage system catalyzes the degradation of glycine. This chain is Aminomethyltransferase, found in Pseudothermotoga lettingae (strain ATCC BAA-301 / DSM 14385 / NBRC 107922 / TMO) (Thermotoga lettingae).